The chain runs to 1025 residues: DNA polymerase (1025 aa).

This sequence belongs to the DNA polymerase type-B family.

It catalyses the reaction DNA(n) + a 2'-deoxyribonucleoside 5'-triphosphate = DNA(n+1) + diphosphate. Replicates the viral genome. Host DNA polymerases cannot substitute for the viral enzyme in this process. This Noctuidae (owlet moths) protein is DNA polymerase.